A 184-amino-acid polypeptide reads, in one-letter code: ATP synthase subunit b, chloroplastic (184 aa).

The chain crosses the membrane as a helical span at residues 27–49 (LATNPINLSVVLGVLIFFGKGVL).

Belongs to the ATPase B chain family. In terms of assembly, F-type ATPases have 2 components, F(1) - the catalytic core - and F(0) - the membrane proton channel. F(1) has five subunits: alpha(3), beta(3), gamma(1), delta(1), epsilon(1). F(0) has four main subunits: a(1), b(1), b'(1) and c(10-14). The alpha and beta chains form an alternating ring which encloses part of the gamma chain. F(1) is attached to F(0) by a central stalk formed by the gamma and epsilon chains, while a peripheral stalk is formed by the delta, b and b' chains.

Its subcellular location is the plastid. The protein localises to the chloroplast thylakoid membrane. Its function is as follows. F(1)F(0) ATP synthase produces ATP from ADP in the presence of a proton or sodium gradient. F-type ATPases consist of two structural domains, F(1) containing the extramembraneous catalytic core and F(0) containing the membrane proton channel, linked together by a central stalk and a peripheral stalk. During catalysis, ATP synthesis in the catalytic domain of F(1) is coupled via a rotary mechanism of the central stalk subunits to proton translocation. Component of the F(0) channel, it forms part of the peripheral stalk, linking F(1) to F(0). The chain is ATP synthase subunit b, chloroplastic from Populus alba (White poplar).